A 114-amino-acid polypeptide reads, in one-letter code: Protein 4 (114 aa).

This is Protein 4 (4) from Hordeum vulgare (Barley).